Here is a 316-residue protein sequence, read N- to C-terminus: Pantothenate kinase (316 aa).

95-102 is an ATP binding site; sequence GSVAVGKS.

This sequence belongs to the prokaryotic pantothenate kinase family.

Its subcellular location is the cytoplasm. The enzyme catalyses (R)-pantothenate + ATP = (R)-4'-phosphopantothenate + ADP + H(+). It participates in cofactor biosynthesis; coenzyme A biosynthesis; CoA from (R)-pantothenate: step 1/5. The polypeptide is Pantothenate kinase (Shewanella sp. (strain ANA-3)).